Here is a 207-residue protein sequence, read N- to C-terminus: Large ribosomal subunit protein uL4 (207 aa).

Residues 49-78 are disordered; sequence HAVKNRSAVSGGGRKPWRQKGTGRARQGSI.

It belongs to the universal ribosomal protein uL4 family. As to quaternary structure, part of the 50S ribosomal subunit.

Its function is as follows. One of the primary rRNA binding proteins, this protein initially binds near the 5'-end of the 23S rRNA. It is important during the early stages of 50S assembly. It makes multiple contacts with different domains of the 23S rRNA in the assembled 50S subunit and ribosome. In terms of biological role, forms part of the polypeptide exit tunnel. The sequence is that of Large ribosomal subunit protein uL4 from Streptococcus equi subsp. zooepidemicus (strain MGCS10565).